The following is a 496-amino-acid chain: Glutamate--tRNA ligase (496 aa).

Positions 12–22 match the 'HIGH' region motif; that stretch reads PSPTGTPHVGL. A 'KMSKS' region motif is present at residues 256–260; the sequence is KLSKR. Residue K259 coordinates ATP.

It belongs to the class-I aminoacyl-tRNA synthetase family. Glutamate--tRNA ligase type 1 subfamily. As to quaternary structure, monomer.

The protein resides in the cytoplasm. It carries out the reaction tRNA(Glu) + L-glutamate + ATP = L-glutamyl-tRNA(Glu) + AMP + diphosphate. Functionally, catalyzes the attachment of glutamate to tRNA(Glu) in a two-step reaction: glutamate is first activated by ATP to form Glu-AMP and then transferred to the acceptor end of tRNA(Glu). The chain is Glutamate--tRNA ligase from Mycobacteroides abscessus (strain ATCC 19977 / DSM 44196 / CCUG 20993 / CIP 104536 / JCM 13569 / NCTC 13031 / TMC 1543 / L948) (Mycobacterium abscessus).